The primary structure comprises 401 residues: Carbamoyl phosphate synthase small chain (401 aa).

Positions 1–203 (MTETAPWTTR…KGYGTLGEAD (203 aa)) are CPSase. L-glutamine is bound by residues Ser56, Gly255, and Gly257. The Glutamine amidotransferase type-1 domain maps to 207 to 395 (HVVCVDFGVK…VNLLRENKGE (189 aa)). Residue Cys284 is the Nucleophile of the active site. L-glutamine-binding residues include Leu285, Gln288, Asn326, Gly328, and Phe329. Catalysis depends on residues His368 and Glu370.

It belongs to the CarA family. Composed of two chains; the small (or glutamine) chain promotes the hydrolysis of glutamine to ammonia, which is used by the large (or ammonia) chain to synthesize carbamoyl phosphate. Tetramer of heterodimers (alpha,beta)4.

The catalysed reaction is hydrogencarbonate + L-glutamine + 2 ATP + H2O = carbamoyl phosphate + L-glutamate + 2 ADP + phosphate + 2 H(+). It carries out the reaction L-glutamine + H2O = L-glutamate + NH4(+). The protein operates within amino-acid biosynthesis; L-arginine biosynthesis; carbamoyl phosphate from bicarbonate: step 1/1. Its pathway is pyrimidine metabolism; UMP biosynthesis via de novo pathway; (S)-dihydroorotate from bicarbonate: step 1/3. Its function is as follows. Small subunit of the glutamine-dependent carbamoyl phosphate synthetase (CPSase). CPSase catalyzes the formation of carbamoyl phosphate from the ammonia moiety of glutamine, carbonate, and phosphate donated by ATP, constituting the first step of 2 biosynthetic pathways, one leading to arginine and/or urea and the other to pyrimidine nucleotides. The small subunit (glutamine amidotransferase) binds and cleaves glutamine to supply the large subunit with the substrate ammonia. The chain is Carbamoyl phosphate synthase small chain from Agrobacterium fabrum (strain C58 / ATCC 33970) (Agrobacterium tumefaciens (strain C58)).